A 455-amino-acid chain; its full sequence is L-serine dehydratase (455 aa).

It belongs to the iron-sulfur dependent L-serine dehydratase family. [4Fe-4S] cluster serves as cofactor.

It carries out the reaction L-serine = pyruvate + NH4(+). It functions in the pathway carbohydrate biosynthesis; gluconeogenesis. The sequence is that of L-serine dehydratase (sdaA) from Haemophilus influenzae (strain ATCC 51907 / DSM 11121 / KW20 / Rd).